The chain runs to 499 residues: Probable cytosol aminopeptidase (499 aa).

Mn(2+)-binding residues include K269 and D274. K281 is an active-site residue. The Mn(2+) site is built by D292, D351, and E353. Residue R355 is part of the active site.

The protein belongs to the peptidase M17 family. The cofactor is Mn(2+).

Its subcellular location is the cytoplasm. The catalysed reaction is Release of an N-terminal amino acid, Xaa-|-Yaa-, in which Xaa is preferably Leu, but may be other amino acids including Pro although not Arg or Lys, and Yaa may be Pro. Amino acid amides and methyl esters are also readily hydrolyzed, but rates on arylamides are exceedingly low.. It carries out the reaction Release of an N-terminal amino acid, preferentially leucine, but not glutamic or aspartic acids.. Presumably involved in the processing and regular turnover of intracellular proteins. Catalyzes the removal of unsubstituted N-terminal amino acids from various peptides. The protein is Probable cytosol aminopeptidase of Actinobacillus pleuropneumoniae serotype 7 (strain AP76).